The sequence spans 635 residues: Early transcription factor 70 kDa subunit (635 aa).

A Helicase ATP-binding domain is found at 32–185 (RSIIDENKSV…SNIISLMSDE (154 aa)). 45–52 (HIMGSGKT) contributes to the ATP binding site. The DEXH box motif lies at 135 to 138 (DEAH). Residues 326–505 (KFKYFITKIE…TLPFDIKKLL (180 aa)) enclose the Helicase C-terminal domain.

This sequence belongs to the helicase family. VETF subfamily. As to quaternary structure, heterodimer of a 70 kDa and a 82 kDa subunit. Part of the early transcription complex composed of ETF, RAP94, and the DNA-directed RNA polymerase.

It is found in the virion. Functionally, acts with RNA polymerase to initiate transcription from early gene promoters. Is recruited by the RPO-associated protein of 94 kDa (RAP94) to form the early transcription complex, which also contains the core RNA polymerase. ETF heterodimer binds to early gene promoters. The polypeptide is Early transcription factor 70 kDa subunit (VETFS) (Oryctolagus cuniculus (Rabbit)).